The sequence spans 54 residues: Large ribosomal subunit protein bL33A (54 aa).

Belongs to the bacterial ribosomal protein bL33 family.

This is Large ribosomal subunit protein bL33A from Mycolicibacterium gilvum (strain PYR-GCK) (Mycobacterium gilvum (strain PYR-GCK)).